A 409-amino-acid polypeptide reads, in one-letter code: Nitrogen permease regulator 2 homolog (409 aa).

The protein belongs to the NPR2 family.

It is found in the cytoplasm. Its subcellular location is the nucleus. In terms of biological role, mediates inactivation of the TORC1 complex in response to amino acid starvation. Post-transcriptional regulator of nitrogen permeases. The polypeptide is Nitrogen permease regulator 2 homolog (Schizosaccharomyces pombe (strain 972 / ATCC 24843) (Fission yeast)).